The primary structure comprises 573 residues: Phosphoenolpyruvate-protein phosphotransferase (573 aa).

Catalysis depends on histidine 190, which acts as the Tele-phosphohistidine intermediate. Positions 297 and 332 each coordinate phosphoenolpyruvate. Residues glutamate 431 and aspartate 455 each contribute to the Mg(2+) site. Phosphoenolpyruvate-binding positions include 454-455 and arginine 465; that span reads ND. Cysteine 502 functions as the Proton donor in the catalytic mechanism.

Belongs to the PEP-utilizing enzyme family. As to quaternary structure, homodimer. Mg(2+) is required as a cofactor.

It is found in the cytoplasm. The catalysed reaction is L-histidyl-[protein] + phosphoenolpyruvate = N(pros)-phospho-L-histidyl-[protein] + pyruvate. Irreversibly inhibited the sulfhydryl reagent N-ethylmaleimide (NEM). General (non sugar-specific) component of the phosphoenolpyruvate-dependent sugar phosphotransferase system (sugar PTS). This major carbohydrate active-transport system catalyzes the phosphorylation of incoming sugar substrates concomitantly with their translocation across the cell membrane. Enzyme I transfers the phosphoryl group from phosphoenolpyruvate (PEP) to the phosphoryl carrier protein (HPr). This is Phosphoenolpyruvate-protein phosphotransferase (ptsI) from Mycoplasma capricolum subsp. capricolum (strain California kid / ATCC 27343 / NCTC 10154).